The sequence spans 590 residues: Aspartate--tRNA(Asp/Asn) ligase (590 aa).

E170 is a binding site for L-aspartate. The aspartate stretch occupies residues 194–197; the sequence is QLFK. R216 provides a ligand contact to L-aspartate. ATP contacts are provided by residues 216-218 and Q225; that span reads RDE. An L-aspartate-binding site is contributed by H448. E482 is a binding site for ATP. Residue R489 participates in L-aspartate binding. Residue 534-537 participates in ATP binding; that stretch reads GWDR. The disordered stretch occupies residues 559–590; sequence GGVDPLTEAPAPITAQQRKESGIDAKPGKDGA. Residues 575–590 show a composition bias toward basic and acidic residues; it reads QRKESGIDAKPGKDGA.

The protein belongs to the class-II aminoacyl-tRNA synthetase family. Type 1 subfamily. In terms of assembly, homodimer.

The protein resides in the cytoplasm. The enzyme catalyses tRNA(Asx) + L-aspartate + ATP = L-aspartyl-tRNA(Asx) + AMP + diphosphate. Its function is as follows. Aspartyl-tRNA synthetase with relaxed tRNA specificity since it is able to aspartylate not only its cognate tRNA(Asp) but also tRNA(Asn). Reaction proceeds in two steps: L-aspartate is first activated by ATP to form Asp-AMP and then transferred to the acceptor end of tRNA(Asp/Asn). This chain is Aspartate--tRNA(Asp/Asn) ligase, found in Mycolicibacterium gilvum (strain PYR-GCK) (Mycobacterium gilvum (strain PYR-GCK)).